A 244-amino-acid polypeptide reads, in one-letter code: Acetoacetate decarboxylase (244 aa).

Lysine 115 acts as the Schiff-base intermediate with acetoacetate in catalysis.

Belongs to the ADC family. In terms of assembly, homododecamer.

The enzyme catalyses acetoacetate + H(+) = acetone + CO2. Its function is as follows. Catalyzes the conversion of acetoacetate to acetone and carbon dioxide. This Clostridium acetobutylicum (strain ATCC 824 / DSM 792 / JCM 1419 / IAM 19013 / LMG 5710 / NBRC 13948 / NRRL B-527 / VKM B-1787 / 2291 / W) protein is Acetoacetate decarboxylase.